The sequence spans 557 residues: CTP synthase (557 aa).

The segment at 1–272 (MARSKIVKHI…DSLVLKKLML (272 aa)) is amidoligase domain. Ser18 serves as a coordination point for CTP. UTP is bound at residue Ser18. ATP is bound at residue 19–24 (SLGKGI). Tyr59 is a binding site for L-glutamine. An ATP-binding site is contributed by Asp76. Mg(2+) contacts are provided by Asp76 and Glu146. CTP-binding positions include 153 to 155 (DIE), 193 to 198 (KTKPTQ), and Lys229. UTP-binding positions include 193-198 (KTKPTQ) and Lys229. Residues 299–543 (EIGVCGKYTK…VAEAKKFRDE (245 aa)) enclose the Glutamine amidotransferase type-1 domain. Residue Gly363 participates in L-glutamine binding. Cys390 (nucleophile; for glutamine hydrolysis) is an active-site residue. L-glutamine-binding positions include 391–394 (LGMQ), Glu414, and Arg471. Active-site residues include His516 and Glu518.

This sequence belongs to the CTP synthase family. As to quaternary structure, homotetramer.

It catalyses the reaction UTP + L-glutamine + ATP + H2O = CTP + L-glutamate + ADP + phosphate + 2 H(+). It carries out the reaction L-glutamine + H2O = L-glutamate + NH4(+). The enzyme catalyses UTP + NH4(+) + ATP = CTP + ADP + phosphate + 2 H(+). It participates in pyrimidine metabolism; CTP biosynthesis via de novo pathway; CTP from UDP: step 2/2. Allosterically activated by GTP, when glutamine is the substrate; GTP has no effect on the reaction when ammonia is the substrate. The allosteric effector GTP functions by stabilizing the protein conformation that binds the tetrahedral intermediate(s) formed during glutamine hydrolysis. Inhibited by the product CTP, via allosteric rather than competitive inhibition. Catalyzes the ATP-dependent amination of UTP to CTP with either L-glutamine or ammonia as the source of nitrogen. Regulates intracellular CTP levels through interactions with the four ribonucleotide triphosphates. This Chloroherpeton thalassium (strain ATCC 35110 / GB-78) protein is CTP synthase.